A 534-amino-acid chain; its full sequence is Probable alkaline/neutral invertase D (534 aa).

A phosphoserine mark is found at serine 7 and serine 37. Position 55 is a phosphothreonine (threonine 55). Serine 532 bears the Phosphoserine mark.

This sequence belongs to the glycosyl hydrolase 100 family.

It catalyses the reaction Hydrolysis of terminal non-reducing beta-D-fructofuranoside residues in beta-D-fructofuranosides.. In terms of biological role, invertase that cleaves sucrose into glucose and fructose. The chain is Probable alkaline/neutral invertase D from Arabidopsis thaliana (Mouse-ear cress).